The following is a 147-amino-acid chain: Nucleoside diphosphate kinase (147 aa).

ATP-binding residues include Lys9, Phe57, Arg85, Thr91, Arg102, and Asn112. The active-site Pros-phosphohistidine intermediate is the His115.

Belongs to the NDK family. In terms of assembly, homotetramer. It depends on Mg(2+) as a cofactor.

It localises to the cytoplasm. The catalysed reaction is a 2'-deoxyribonucleoside 5'-diphosphate + ATP = a 2'-deoxyribonucleoside 5'-triphosphate + ADP. It catalyses the reaction a ribonucleoside 5'-diphosphate + ATP = a ribonucleoside 5'-triphosphate + ADP. In terms of biological role, major role in the synthesis of nucleoside triphosphates other than ATP. The ATP gamma phosphate is transferred to the NDP beta phosphate via a ping-pong mechanism, using a phosphorylated active-site intermediate. This Listeria monocytogenes serotype 4a (strain HCC23) protein is Nucleoside diphosphate kinase.